Here is a 281-residue protein sequence, read N- to C-terminus: Elongation factor 1-delta (281 aa).

Residue A2 is modified to N-acetylalanine. K17 bears the N6-acetyllysine mark. Phosphoserine is present on residues S37, E40, S44, and S60. T73 carries the phosphothreonine modification. Residues 80–115 (LVVRIASLEVENQSLRGVVQELQQAISKLEARLNVL) form a leucine-zipper region. Phosphoserine occurs at positions 86, 91, 94, and 106. K107 bears the N6-acetyllysine mark. K117 is subject to N6-acetyllysine; alternate. An N6-succinyllysine; alternate modification is found at K117. The interval 118–172 (SSPGHRATAPQTQHVSPMRQVEPPAKKPATPAEDDEDDDIDLFGSDNEEEDKEAA) is disordered. Phosphoserine is present on S119. A Phosphothreonine modification is found at T129. A Phosphoserine modification is found at S133. T147 carries the post-translational modification Phosphothreonine. Residues 149-169 (AEDDEDDDIDLFGSDNEEEDK) are compositionally biased toward acidic residues. S162 is subject to Phosphoserine; by CK2. The interval 173 to 281 (QLREERLRQY…SVDIAAFNKI (109 aa)) is catalytic (GEF).

This sequence belongs to the EF-1-beta/EF-1-delta family. EF-1 is composed of 4 subunits: alpha, beta, delta isoform 1, and gamma. Isoform 2 interacts with HSF1 and NFE2L2. As to expression, isoform 2 is specifically expressed in brain, cerebellum and testis.

The protein localises to the nucleus. Its function is as follows. EF-1-beta and EF-1-delta stimulate the exchange of GDP bound to EF-1-alpha to GTP, regenerating EF-1-alpha for another round of transfer of aminoacyl-tRNAs to the ribosome. Functionally, regulates induction of heat-shock-responsive genes through association with heat shock transcription factors and direct DNA-binding at heat shock promoter elements (HSE). The sequence is that of Elongation factor 1-delta (EEF1D) from Homo sapiens (Human).